A 177-amino-acid polypeptide reads, in one-letter code: LOB domain-containing protein 33 (177 aa).

An LOB domain is found at 6-108; that stretch reads SSCGACKFLR…EEIEFLGSQM (103 aa).

It belongs to the LOB domain-containing protein family. As to expression, expressed in roots.

This chain is LOB domain-containing protein 33 (LBD33), found in Arabidopsis thaliana (Mouse-ear cress).